Here is a 109-residue protein sequence, read N- to C-terminus: Small ribosomal subunit protein bS6 (109 aa).

The protein belongs to the bacterial ribosomal protein bS6 family.

In terms of biological role, binds together with bS18 to 16S ribosomal RNA. This Anaplasma marginale (strain St. Maries) protein is Small ribosomal subunit protein bS6.